A 239-amino-acid chain; its full sequence is Lactate utilization protein A (239 aa).

It belongs to the LutA/YkgE family.

Its function is as follows. Is involved in L-lactate degradation and allows cells to grow with lactate as the sole carbon source. This is Lactate utilization protein A from Shouchella clausii (strain KSM-K16) (Alkalihalobacillus clausii).